A 452-amino-acid chain; its full sequence is Protein mab-21-like 4 (452 aa).

This chain is Protein mab-21-like 4 (Mab21l4), found in Mus musculus (Mouse).